Consider the following 402-residue polypeptide: Myb-related protein 1 (402 aa).

Positions 42–102 constitute an HTH myb-type domain; that stretch reads TDAKPRLKWT…HLQKYRLSKN (61 aa). The H-T-H motif DNA-binding region spans 73–98; it reads PKTIMKVMGIPGLTLYHLKSHLQKYR. A coiled-coil region spans residues 148 to 168; sequence SDALQMQIEVQRRLHEQLEVQ. Residues 161–166 carry the LHEQLE motif; it reads LHEQLE. The segment covering 238–260 has biased composition (polar residues); sequence QQMQKTYPPNSSLDSCLTSSEGT. Disordered stretches follow at residues 238–266, 344–363, and 382–402; these read QQMQKTYPPNSSLDSCLTSSEGTQKAPKM, EHRGRSSNNSEYTEERFNEN, and HDENYGTTRPKQFDLNGFSWN.

Belongs to the MYB-CC family. In terms of assembly, isoforms 1 and 2: homodimer. Isoform 3: loss of dimerization. Expressed in phloem and/or cambium.

Its subcellular location is the nucleus. In terms of biological role, transcription factor that may act on the GAL1 promoter. Acts redundantly with MYR2 as a repressor of flowering and organ elongation under decreased light intensity. Represses gibberellic acid (GA)-dependent responses and affects levels of bioactive GA. In Arabidopsis thaliana (Mouse-ear cress), this protein is Myb-related protein 1.